Consider the following 455-residue polypeptide: Ribulose bisphosphate carboxylase large chain (455 aa).

N6,N6,N6-trimethyllysine is present on Lys5. Asn114 and Thr164 together coordinate substrate. Catalysis depends on Lys166, which acts as the Proton acceptor. Lys168 serves as a coordination point for substrate. Mg(2+)-binding residues include Lys192, Asp194, and Glu195. Residue Lys192 is modified to N6-carboxylysine. His285 (proton acceptor) is an active-site residue. Substrate is bound by residues Arg286, His318, and Ser370.

The protein belongs to the RuBisCO large chain family. Type I subfamily. In terms of assembly, heterohexadecamer of 8 large chains and 8 small chains; disulfide-linked. The disulfide link is formed within the large subunit homodimers. The cofactor is Mg(2+). Post-translationally, the disulfide bond which can form in the large chain dimeric partners within the hexadecamer appears to be associated with oxidative stress and protein turnover.

The protein resides in the plastid. The protein localises to the chloroplast. The catalysed reaction is 2 (2R)-3-phosphoglycerate + 2 H(+) = D-ribulose 1,5-bisphosphate + CO2 + H2O. It carries out the reaction D-ribulose 1,5-bisphosphate + O2 = 2-phosphoglycolate + (2R)-3-phosphoglycerate + 2 H(+). Its function is as follows. RuBisCO catalyzes two reactions: the carboxylation of D-ribulose 1,5-bisphosphate, the primary event in carbon dioxide fixation, as well as the oxidative fragmentation of the pentose substrate in the photorespiration process. Both reactions occur simultaneously and in competition at the same active site. The sequence is that of Ribulose bisphosphate carboxylase large chain from Lupinus digitatus (Lupine).